The primary structure comprises 539 residues: Probable protein kinase UbiB (539 aa).

The Protein kinase domain occupies 125–493 (RFDVEPLASA…RRRQGDRWAL (369 aa)). ATP contacts are provided by residues 131-139 (LASASVAQV) and Lys153. The active-site Proton acceptor is the Asp288. The next 2 helical transmembrane spans lie at 495 to 515 (LLGA…AEAA) and 517 to 537 (LAAP…YLIV).

This sequence belongs to the ABC1 family. UbiB subfamily.

The protein localises to the cell inner membrane. It functions in the pathway cofactor biosynthesis; ubiquinone biosynthesis [regulation]. Is probably a protein kinase regulator of UbiI activity which is involved in aerobic coenzyme Q (ubiquinone) biosynthesis. The sequence is that of Probable protein kinase UbiB from Pseudomonas putida (strain W619).